We begin with the raw amino-acid sequence, 566 residues long: Liver carboxylesterase (566 aa).

Positions 1–18 are cleaved as a signal peptide; the sequence is MWLLPLVLTSLASSATWA. Asparagine 80 carries N-linked (GlcNAc...) asparagine glycosylation. Residues cysteine 88 and cysteine 117 are joined by a disulfide bond. Serine 222 acts as the Acyl-ester intermediate in catalysis. An intrachain disulfide couples cysteine 274 to cysteine 285. Glutamate 354 (charge relay system) is an active-site residue. The residue at position 379 (serine 379) is a Phosphoserine. The active-site Charge relay system is the histidine 467. Positions 563 to 566 match the Prevents secretion from ER motif; the sequence is HAEL.

The protein belongs to the type-B carboxylesterase/lipase family.

The protein resides in the endoplasmic reticulum lumen. The catalysed reaction is a carboxylic ester + H2O = an alcohol + a carboxylate + H(+). With respect to regulation, activated by CHAPS at concentrations of up to 130 mM, higher concentrations reduce activity. In the presence of CHAPS, activity is stimulated by non-ionic detergents. Inhibited by the esterase inhibitors diisopropylfluorophosphate and phenylmethylsulfonyl fluoride. Involved in the detoxification of xenobiotics and in the activation of ester and amide prodrugs. Active towards triacylglycerides containing short-chain fatty acids from C2 to C6, and 1(3)-monoacylglycerols containing fatty acids from C2 to C12. Inactive on long-chain triacylglycerols and diacylglycerol. Hydrolyzes aromatic and alkyl esters and vitamin A acetate. The hydrolysis rate depends upon the amino acid promoiety and the esterification site of the prodrug. Aromatic promoieties are favored, highest rates are observed with phenylalanyl progdrugs, hydrolysis of valyl and isoleucyl prodrugs is less efficient. With floxuridine prodrugs, activity is higher on 5' monoesters than on 3' monoesters. With gemcitabine prodrugs, activity is higher on 3' monoesters than on 5' monoesters. The polypeptide is Liver carboxylesterase (Sus scrofa (Pig)).